We begin with the raw amino-acid sequence, 305 residues long: Sulfate adenylyltransferase subunit 2 (305 aa).

Belongs to the PAPS reductase family. CysD subfamily. Heterodimer composed of CysD, the smaller subunit, and CysN.

The enzyme catalyses sulfate + ATP + H(+) = adenosine 5'-phosphosulfate + diphosphate. Its pathway is sulfur metabolism; hydrogen sulfide biosynthesis; sulfite from sulfate: step 1/3. Functionally, with CysN forms the ATP sulfurylase (ATPS) that catalyzes the adenylation of sulfate producing adenosine 5'-phosphosulfate (APS) and diphosphate, the first enzymatic step in sulfur assimilation pathway. APS synthesis involves the formation of a high-energy phosphoric-sulfuric acid anhydride bond driven by GTP hydrolysis by CysN coupled to ATP hydrolysis by CysD. The polypeptide is Sulfate adenylyltransferase subunit 2 (Ectopseudomonas mendocina (strain ymp) (Pseudomonas mendocina)).